The primary structure comprises 513 residues: Probable DNA ligase (513 aa).

ATP is bound at residue glutamate 213. Residue lysine 215 is the N6-AMP-lysine intermediate of the active site. Residues arginine 220, arginine 235, glutamate 264, phenylalanine 304, arginine 376, and lysine 382 each coordinate ATP.

Belongs to the ATP-dependent DNA ligase family. It depends on Mg(2+) as a cofactor.

It carries out the reaction ATP + (deoxyribonucleotide)n-3'-hydroxyl + 5'-phospho-(deoxyribonucleotide)m = (deoxyribonucleotide)n+m + AMP + diphosphate.. Functionally, DNA ligase that seals nicks in double-stranded DNA during DNA replication, DNA recombination and DNA repair. This is Probable DNA ligase from Anaeromyxobacter dehalogenans (strain 2CP-C).